The chain runs to 349 residues: MTNITLQKQHRTLWHFIPGLALSAVITGVALWGGSIPAVAGAGFSALTLAILLGMVLGNTIYPHIWKSCDGGVLFAKQYLLRLGIILYGFRLTFSQIADVGISGIIIDVLTLSSTFLLACFLGQKVFGLDKHTSWLIGAGSSICGAAAVLATEPVVKAEASKVTVAVATVVIFGTVAIFLYPAIYPLMSQWFSPETFGIYIGSTVHEVAQVVAAGHAISPDAENAAVISKMLRVMMLAPFLILLAARVKQLSGANSGEKSKITIPWFAILFIVVAIFNSFHLLPQSVVNMLVTLDTFLLAMAMAALGLTTHVSALKKAGAKPLLMALVLFAWLIVGGGAINYVIQSVIA.

The Periplasmic portion of the chain corresponds to 1 to 12; sequence MTNITLQKQHRT. Residues 13-32 traverse the membrane as a helical segment; it reads LWHFIPGLALSAVITGVALW. The Cytoplasmic portion of the chain corresponds to 33-35; that stretch reads GGS. Residues 36–58 traverse the membrane as a helical segment; that stretch reads IPAVAGAGFSALTLAILLGMVLG. Residues 59 to 99 lie on the Periplasmic side of the membrane; that stretch reads NTIYPHIWKSCDGGVLFAKQYLLRLGIILYGFRLTFSQIAD. Residues 100 to 122 form a helical membrane-spanning segment; the sequence is VGISGIIIDVLTLSSTFLLACFL. At 123-131 the chain is on the cytoplasmic side; it reads GQKVFGLDK. A helical membrane pass occupies residues 132 to 151; the sequence is HTSWLIGAGSSICGAAAVLA. Over 152–162 the chain is Periplasmic; that stretch reads TEPVVKAEASK. The chain crosses the membrane as a helical span at residues 163–185; that stretch reads VTVAVATVVIFGTVAIFLYPAIY. The Cytoplasmic portion of the chain corresponds to 186–261; it reads PLMSQWFSPE…SGANSGEKSK (76 aa). Residues 262-283 traverse the membrane as a helical segment; it reads ITIPWFAILFIVVAIFNSFHLL. Residues 284–289 lie on the Periplasmic side of the membrane; the sequence is PQSVVN. Residues 290 to 312 traverse the membrane as a helical segment; that stretch reads MLVTLDTFLLAMAMAALGLTTHV. Topologically, residues 313 to 321 are cytoplasmic; that stretch reads SALKKAGAK. The helical transmembrane segment at 322-344 threads the bilayer; sequence PLLMALVLFAWLIVGGGAINYVI. The Periplasmic segment spans residues 345 to 349; the sequence is QSVIA.

Belongs to the UPF0324 family.

The protein resides in the cell inner membrane. This is UPF0324 inner membrane protein YeiH (yeiH) from Escherichia coli O157:H7.